We begin with the raw amino-acid sequence, 160 residues long: 3-hydroxyacyl-[acyl-carrier-protein] dehydratase FabZ (160 aa).

Residue His-63 is part of the active site.

Belongs to the thioester dehydratase family. FabZ subfamily.

The protein resides in the cytoplasm. It catalyses the reaction a (3R)-hydroxyacyl-[ACP] = a (2E)-enoyl-[ACP] + H2O. Its function is as follows. Involved in unsaturated fatty acids biosynthesis. Catalyzes the dehydration of short chain beta-hydroxyacyl-ACPs and long chain saturated and unsaturated beta-hydroxyacyl-ACPs. The chain is 3-hydroxyacyl-[acyl-carrier-protein] dehydratase FabZ from Xylella fastidiosa (strain M12).